Reading from the N-terminus, the 183-residue chain is Endoribonuclease YbeY (183 aa).

Zn(2+) contacts are provided by His-143, His-147, and His-153.

It belongs to the endoribonuclease YbeY family. Zn(2+) is required as a cofactor.

Its subcellular location is the cytoplasm. Functionally, single strand-specific metallo-endoribonuclease involved in late-stage 70S ribosome quality control and in maturation of the 3' terminus of the 16S rRNA. The sequence is that of Endoribonuclease YbeY from Rickettsia bellii (strain RML369-C).